Consider the following 261-residue polypeptide: Thiamine thiazole synthase (261 aa).

NAD(+) contacts are provided by residues Ser-40, 59-60 (ER), Gly-67, Val-133, and 159-161 (HVD). 2 residues coordinate Fe cation: Asp-161 and His-176. Residues Ser-179 and Met-226 each contribute to the NAD(+) site. Arg-236 provides a ligand contact to glycine.

Belongs to the THI4 family. In terms of assembly, homooctamer; tetramer of dimers. Fe(2+) is required as a cofactor.

The enzyme catalyses hydrogen sulfide + glycine + NAD(+) = ADP-5-ethyl-4-methylthiazole-2-carboxylate + nicotinamide + 3 H2O + H(+). Its pathway is cofactor biosynthesis; thiamine diphosphate biosynthesis. Functionally, involved in the biosynthesis of the thiazole moiety of thiamine. Catalyzes the conversion of NAD and glycine to adenosine diphosphate 5-(2-hydroxyethyl)-4-methylthiazole-2-carboxylate (ADT), an adenylated thiazole intermediate, using free sulfide as a source of sulfur. In Methanococcus vannielii (strain ATCC 35089 / DSM 1224 / JCM 13029 / OCM 148 / SB), this protein is Thiamine thiazole synthase.